A 596-amino-acid polypeptide reads, in one-letter code: Elongation factor 4 (596 aa).

Positions 2-183 (KNIRNFSIIA…EIIRRIPAPN (182 aa)) constitute a tr-type G domain. GTP is bound by residues 14 to 19 (DHGKST) and 130 to 133 (NKID).

Belongs to the TRAFAC class translation factor GTPase superfamily. Classic translation factor GTPase family. LepA subfamily.

The protein resides in the cell inner membrane. It carries out the reaction GTP + H2O = GDP + phosphate + H(+). Required for accurate and efficient protein synthesis under certain stress conditions. May act as a fidelity factor of the translation reaction, by catalyzing a one-codon backward translocation of tRNAs on improperly translocated ribosomes. Back-translocation proceeds from a post-translocation (POST) complex to a pre-translocation (PRE) complex, thus giving elongation factor G a second chance to translocate the tRNAs correctly. Binds to ribosomes in a GTP-dependent manner. The sequence is that of Elongation factor 4 from Wolinella succinogenes (strain ATCC 29543 / DSM 1740 / CCUG 13145 / JCM 31913 / LMG 7466 / NCTC 11488 / FDC 602W) (Vibrio succinogenes).